A 500-amino-acid polypeptide reads, in one-letter code: Protein C13 (500 aa).

A BTB domain is found at 27–89; sequence EEIVFIMTVG…IETGIVTIDL (63 aa). 4 Kelch repeats span residues 301-348, 349-395, 397-440, and 441-490; these read ILYL…IFKN, RIYV…GTDN, LYVV…YHHG, and YIYM…IIED.

It belongs to the poxviruses Kelch family.

This chain is Protein C13, found in Swinepox virus (strain Kasza) (SWPV).